Reading from the N-terminus, the 234-residue chain is NAD-dependent protein deacetylase (234 aa).

In terms of domain architecture, Deacetylase sirtuin-type spans 1 to 234; it reads MSDITAAQTT…AVDFFEGVQV (234 aa). NAD(+)-binding residues include Ala23, Thr27, Arg35, Gln99, Ile101, Asp102, His117, Thr184, Ser185, Asn208, and Val226. Ile101 and Asp102 together coordinate nicotinamide. Residue His117 is the Proton acceptor of the active site.

Belongs to the sirtuin family. Class U subfamily.

Its subcellular location is the cytoplasm. It carries out the reaction N(6)-acetyl-L-lysyl-[protein] + NAD(+) + H2O = 2''-O-acetyl-ADP-D-ribose + nicotinamide + L-lysyl-[protein]. NAD-dependent protein deacetylase which modulates the activities of several enzymes which are inactive in their acetylated form. The chain is NAD-dependent protein deacetylase from Lactiplantibacillus plantarum (strain ATCC BAA-793 / NCIMB 8826 / WCFS1) (Lactobacillus plantarum).